A 550-amino-acid chain; its full sequence is Chaperonin GroEL (550 aa).

ATP-binding positions include 30-33 (TLGP), Lys-51, 87-91 (DGTTT), Gly-415, 481-483 (NAA), and Asp-497.

This sequence belongs to the chaperonin (HSP60) family. In terms of assembly, forms a cylinder of 14 subunits composed of two heptameric rings stacked back-to-back. Interacts with the co-chaperonin GroES.

It localises to the cytoplasm. The enzyme catalyses ATP + H2O + a folded polypeptide = ADP + phosphate + an unfolded polypeptide.. Together with its co-chaperonin GroES, plays an essential role in assisting protein folding. The GroEL-GroES system forms a nano-cage that allows encapsulation of the non-native substrate proteins and provides a physical environment optimized to promote and accelerate protein folding. The sequence is that of Chaperonin GroEL from Photobacterium profundum (strain SS9).